The chain runs to 247 residues: MLPSQEASKLYHEHYMRNSRAIGVLWAIFTICFAIINVVVFIQPYWVGDSVSTPKPGYFGLFHYCVGSGLAGRELTCRGSFTDFSTIPSGAFKAAAFFVLLSMVLILGCITCFALFFFCNTATVYKICAWMQLLAALCLVLGCMIFPDGWDAETIRDMCGAKTGKYSLGDCSVRWAYILAIIGILNALILSFLAFVLGNRQTDLLQEELKQENKDFVGSTVSSVLRPGGDVSGWGVLPCPVAHTQGP.

4 helical membrane passes run 22–42 (IGVL…VVFI), 97–117 (FFVL…ALFF), 127–147 (ICAW…MIFP), and 178–198 (ILAI…FVLG).

Belongs to the LHFP family. Interacts with GABA(A) receptor subunits. Interacts with GABRB3. Interacts with GABRA2. Interacts with GABRG2. Identified in a complex of 720 kDa composed of LHFPL4, NLGN2, GABRA1, GABRB2, GABRG2 and GABRB3. Interacts with GABRA1. Interacts with NLGN2; leading to mutual regulation of protein level and synaptic clustering.

Its subcellular location is the cell projection. It localises to the dendrite. The protein localises to the postsynaptic cell membrane. Its function is as follows. Plays a role in the regulation of inhibitory synapse formation and function by being involved in maintening gamma-aminobutyric acid receptors (GABAARs) clustering and their associated scaffold proteins at inhibitory synaptic sites. Acts in concert with NLGN2 to recruit or stabilize GABAARs. In Bos taurus (Bovine), this protein is LHFPL tetraspan subfamily member 4 protein.